The sequence spans 295 residues: Polyadenylate-binding protein 2-B (295 aa).

The segment at Met1–Gln102 is disordered. Composition is skewed to gly residues over residues Leu19–Asp31 and Gly71–Gly81. Positions Glu83 to Gly96 are enriched in acidic residues. Positions Asp106–Ser140 form a coiled coil. The interval Asn145–Tyr295 is necessary for homooligomerization. One can recognise an RRM domain in the interval Arg162–Thr239.

In terms of assembly, monomer and homooligomer. Binds RNA as a monomer and oligomerizes when bound to poly(A).

It is found in the nucleus. Its subcellular location is the cytoplasm. In terms of biological role, involved in the 3'-end formation of mRNA precursors (pre-mRNA) by the addition of a poly(A) tail of 200-250 nt to the upstream cleavage product. Stimulates poly(A) polymerase (PAPOLA) conferring processivity on the poly(A) tail elongation reaction and also controls the poly(A) tail length. Increases the affinity of poly(A) polymerase for RNA. Binds to poly(A) and to poly(G) with high affinity. May protect the poly(A) tail from degradation. The polypeptide is Polyadenylate-binding protein 2-B (pabpn1-b) (Xenopus laevis (African clawed frog)).